A 1535-amino-acid chain; its full sequence is CLIP-associating protein 1 (1535 aa).

HEAT repeat units lie at residues alanine 87 to asparagine 124 and leucine 163 to glutamate 200. The tract at residues asparagine 237–alanine 290 is disordered. Residue serine 246 is modified to Phosphoserine. Over residues proline 252–serine 266 the composition is skewed to low complexity. Residues arginine 267–methionine 279 are compositionally biased toward polar residues. A compositionally biased stretch (low complexity) spans serine 280–alanine 290. HEAT repeat units lie at residues histidine 405 to threonine 440 and histidine 441 to threonine 477. Disordered regions lie at residues serine 543–serine 600 and serine 612–proline 782. 5 positions are modified to phosphoserine: serine 545, serine 548, serine 558, serine 559, and serine 568. Over residues serine 548–leucine 567 the composition is skewed to low complexity. Positions serine 579–serine 594 are enriched in low complexity. Serine 600 bears the Phosphoserine mark. Residues serine 612 to serine 633 show a composition bias toward low complexity. Phosphoserine occurs at positions 636, 646, 647, and 649. The segment covering glutamine 645–aspartate 658 has biased composition (polar residues). Threonine 656 carries the phosphothreonine modification. Residues arginine 662 to proline 782 are interaction with microtubules, MAPRE1 and MAPRE3. Over residues arginine 673–serine 695 the composition is skewed to low complexity. 4 positions are modified to phosphoserine: serine 684, serine 688, serine 695, and serine 702. At threonine 708 the chain carries Phosphothreonine. Serine 711 is subject to Phosphoserine. Polar residues predominate over residues glutamine 721–asparagine 730. Phosphoserine is present on residues serine 784, serine 794, and serine 820. The HEAT 5 repeat unit spans residues glutamine 971 to proline 1008. The interval leucine 1078 to serine 1157 is disordered. A compositionally biased stretch (polar residues) spans lysine 1079–glycine 1094. Serine 1088 carries the post-translational modification Phosphoserine. Phosphothreonine occurs at positions 1092 and 1096. The span at serine 1103–threonine 1112 shows a compositional bias: low complexity. Phosphoserine is present on residues serine 1110, phenylalanine 1139, and serine 1193. Residues proline 1200–serine 1213 are compositionally biased toward basic and acidic residues. Disordered stretches follow at residues proline 1200–glycine 1233 and leucine 1245–tyrosine 1266. The residue at position 1220 (serine 1220) is a Phosphoserine. An interaction with CLIP2 and RSN region spans residues arginine 1251–serine 1535. An interaction with PHLDB2 region spans residues arginine 1251–serine 1535. The interval phenylalanine 1253 to serine 1535 is localization to kinetochores. Positions aspartate 1296–lysine 1327 form a coiled coil. 2 HEAT repeats span residues glutamate 1339–alanine 1376 and glutamine 1457–glutamate 1494.

This sequence belongs to the CLASP family. In terms of assembly, interacts with ERC1, MAPRE1, MAPRE3, microtubules, and PHLDB2. The interaction with ERC1 may be mediated by PHLDB2. Interacts with GCC2; recruits CLASP1 to Golgi membranes. Interacts with CLIP2 and RSN. Interacts with MACF1. Interacts with mtcl2 and MTCL1. Highly expressed in brain and heart and at lower levels in kidney, lung, skeletal muscle and testis.

The protein resides in the cytoplasm. It localises to the cytoskeleton. Its subcellular location is the microtubule organizing center. It is found in the centrosome. The protein localises to the chromosome. The protein resides in the centromere. It localises to the kinetochore. Its subcellular location is the spindle. It is found in the golgi apparatus. The protein localises to the trans-Golgi network. Its function is as follows. Microtubule plus-end tracking protein that promotes the stabilization of dynamic microtubules. Involved in the nucleation of noncentrosomal microtubules originating from the trans-Golgi network (TGN). Required for the polarization of the cytoplasmic microtubule arrays in migrating cells towards the leading edge of the cell. May act at the cell cortex to enhance the frequency of rescue of depolymerizing microtubules by attaching their plus-ends to cortical platforms composed of ERC1 and PHLDB2. This cortical microtubule stabilizing activity is regulated at least in part by phosphatidylinositol 3-kinase signaling. Also performs a similar stabilizing function at the kinetochore which is essential for the bipolar alignment of chromosomes on the mitotic spindle. This is CLIP-associating protein 1 (Clasp1) from Mus musculus (Mouse).